The following is a 322-amino-acid chain: Adenine deaminase (322 aa).

Residues histidine 11, histidine 13, and histidine 189 each contribute to the Zn(2+) site. Glutamate 192 (proton donor) is an active-site residue. Position 270 (aspartate 270) interacts with Zn(2+). Aspartate 271 contributes to the substrate binding site.

It belongs to the metallo-dependent hydrolases superfamily. Adenosine and AMP deaminases family. Adenine deaminase type 2 subfamily. It depends on Zn(2+) as a cofactor.

It carries out the reaction adenine + H2O + H(+) = hypoxanthine + NH4(+). Its function is as follows. Catalyzes the hydrolytic deamination of adenine to hypoxanthine. Plays an important role in the purine salvage pathway and in nitrogen catabolism. The sequence is that of Adenine deaminase from Rhizobium etli (strain ATCC 51251 / DSM 11541 / JCM 21823 / NBRC 15573 / CFN 42).